A 483-amino-acid polypeptide reads, in one-letter code: Cysteine--tRNA ligase (483 aa).

Residue Cys27 participates in Zn(2+) binding. The 'HIGH' region signature appears at 29 to 39; the sequence is ITAYDYCHIGH. Residues Cys208, His231, and Glu235 each contribute to the Zn(2+) site. The short motif at 263-267 is the 'KMSKS' region element; that stretch reads KMSKS. ATP is bound at residue Lys266.

This sequence belongs to the class-I aminoacyl-tRNA synthetase family. In terms of assembly, monomer. Zn(2+) is required as a cofactor.

It localises to the cytoplasm. It carries out the reaction tRNA(Cys) + L-cysteine + ATP = L-cysteinyl-tRNA(Cys) + AMP + diphosphate. The sequence is that of Cysteine--tRNA ligase from Desulfovibrio desulfuricans (strain ATCC 27774 / DSM 6949 / MB).